Reading from the N-terminus, the 274-residue chain is Thiamine kinase (274 aa).

The protein belongs to the thiamine kinase family.

The enzyme catalyses thiamine + ATP = thiamine phosphate + ADP + H(+). It functions in the pathway cofactor biosynthesis; thiamine diphosphate biosynthesis; thiamine phosphate from thiamine: step 1/1. In terms of biological role, catalyzes the ATP-dependent phosphorylation of thiamine to thiamine phosphate. Is involved in thiamine salvage. This chain is Thiamine kinase, found in Shigella flexneri serotype 5b (strain 8401).